A 619-amino-acid polypeptide reads, in one-letter code: Dihydroxy-acid dehydratase (619 aa).

Asp-81 contacts Mg(2+). Cys-122 lines the [2Fe-2S] cluster pocket. Residues Asp-123 and Lys-124 each contribute to the Mg(2+) site. An N6-carboxylysine modification is found at Lys-124. Cys-201 lines the [2Fe-2S] cluster pocket. Position 496 (Glu-496) interacts with Mg(2+). Ser-522 (proton acceptor) is an active-site residue.

This sequence belongs to the IlvD/Edd family. As to quaternary structure, homodimer. [2Fe-2S] cluster is required as a cofactor. Requires Mg(2+) as cofactor.

It catalyses the reaction (2R)-2,3-dihydroxy-3-methylbutanoate = 3-methyl-2-oxobutanoate + H2O. It carries out the reaction (2R,3R)-2,3-dihydroxy-3-methylpentanoate = (S)-3-methyl-2-oxopentanoate + H2O. It functions in the pathway amino-acid biosynthesis; L-isoleucine biosynthesis; L-isoleucine from 2-oxobutanoate: step 3/4. The protein operates within amino-acid biosynthesis; L-valine biosynthesis; L-valine from pyruvate: step 3/4. In terms of biological role, functions in the biosynthesis of branched-chain amino acids. Catalyzes the dehydration of (2R,3R)-2,3-dihydroxy-3-methylpentanoate (2,3-dihydroxy-3-methylvalerate) into 2-oxo-3-methylpentanoate (2-oxo-3-methylvalerate) and of (2R)-2,3-dihydroxy-3-methylbutanoate (2,3-dihydroxyisovalerate) into 2-oxo-3-methylbutanoate (2-oxoisovalerate), the penultimate precursor to L-isoleucine and L-valine, respectively. The protein is Dihydroxy-acid dehydratase of Burkholderia vietnamiensis (strain G4 / LMG 22486) (Burkholderia cepacia (strain R1808)).